The primary structure comprises 83 residues: Sulfur carrier protein TusA (83 aa).

The Cysteine persulfide intermediate role is filled by Cys-19.

The protein belongs to the sulfur carrier protein TusA family.

It localises to the cytoplasm. Its function is as follows. Sulfur carrier protein which probably makes part of a sulfur-relay system. The protein is Sulfur carrier protein TusA of Vibrio atlanticus (strain LGP32) (Vibrio splendidus (strain Mel32)).